Reading from the N-terminus, the 461-residue chain is SWM histone demethylase complex subunit phf1 (461 aa).

Positions 79–130 (PYGGMTMPASSSSGATSVPPEQDPSLSVSFNRLPKSASTKTKNGRIRSSRRE) are disordered. Residues 102–119 (PSLSVSFNRLPKSASTKT) are compositionally biased toward polar residues. The PHD-type zinc-finger motif lies at 190–246 (VTLCSVCQRGHSPLSNRIVFCDGCNSPYHQLCHHPPIDDATVQDVDAEWFCMKCQYR).

In terms of assembly, component of the SWM histone demethylase complex composed of at least lsd1, lsd2, phf1 and phf2.

It localises to the nucleus. In terms of biological role, component of the SWM histone demethylase complex that specifically demethylates H3K9me2, a specific tag for epigenetic transcriptional activation, thereby acting as a corepressor. Has a role in regulating heterochromatin propagation and euchromatic transcription. The protein is SWM histone demethylase complex subunit phf1 (phf1) of Schizosaccharomyces pombe (strain 972 / ATCC 24843) (Fission yeast).